Here is a 511-residue protein sequence, read N- to C-terminus: Exodeoxyribonuclease 7 large subunit (511 aa).

This sequence belongs to the XseA family. Heterooligomer composed of large and small subunits.

The protein resides in the cytoplasm. It carries out the reaction Exonucleolytic cleavage in either 5'- to 3'- or 3'- to 5'-direction to yield nucleoside 5'-phosphates.. Functionally, bidirectionally degrades single-stranded DNA into large acid-insoluble oligonucleotides, which are then degraded further into small acid-soluble oligonucleotides. This Brucella suis biovar 1 (strain 1330) protein is Exodeoxyribonuclease 7 large subunit.